The sequence spans 170 residues: NADH-ubiquinone oxidoreductase chain 6 (170 aa).

5 consecutive transmembrane segments (helical) span residues 1–21, 26–46, 49–69, 86–106, and 138–158; these read MIYM…AVAS, FYAA…IVSF, SFLS…VFAY, VVFY…FLGG, and WVII…GIWV.

It belongs to the complex I subunit 6 family. As to quaternary structure, core subunit of respiratory chain NADH dehydrogenase (Complex I) which is composed of 45 different subunits.

The protein localises to the mitochondrion inner membrane. It carries out the reaction a ubiquinone + NADH + 5 H(+)(in) = a ubiquinol + NAD(+) + 4 H(+)(out). Core subunit of the mitochondrial membrane respiratory chain NADH dehydrogenase (Complex I) which catalyzes electron transfer from NADH through the respiratory chain, using ubiquinone as an electron acceptor. Essential for the catalytic activity and assembly of complex I. This chain is NADH-ubiquinone oxidoreductase chain 6 (mt-nd6), found in Xenopus laevis (African clawed frog).